The primary structure comprises 619 residues: MKFLGIAALVAGLLAPSLVLGAPAPGTEGVNLLTPVDKRQDSQAERYGGGGGGGCNSPTNRQCWSPGFNINTDYELGTPNTGKTRRYKLTLTETDNWIGPDGVIKDKVMMVNDKIIGPTIQADWGDYIEITVINKLKSNGTSIHWHGMHQRNSNIQDGVNGVTECPIPPRGGSKVYRWRATQYGTSWYHSHFSAQYGNGIVGPIVINGPASANYDVDLGPFPLTDYYYDTADRLVLLTQHAGPPPSNNVLFNGFAKHPTTGAGQYATVSLTKGKKHRLRLINTSVENHFQLSLVNHSMTIISADLVPVQPYKVDSLFLGVGQRYDVIIDANQAVGNYWFNVTFGGSKLCGDSDNHYPAAIFRYQGAPKALPTNQGVAPVDHQCLDLNDLKPVLQRSLNTNSIALNTGNTIPITLDGFVWRVNGTAININWNKPVLEYVLTGNTNYSQSDNIVQVEGVNQWKYWLIENDPDGAFSLPHPIHLHGHDFLILGRSPDVTAISQTRYVFDPAVDMARLNGNNPTRRDTAMLPAKGWLLIAFRTDNPGSWLMHCHIAWHVSGGLSNQFLERAQDLRNSISPADKKAFNDNCDAWRAYFPDNAPFPKDDSGLRSGVKAREVKMKW.

Positions 1–21 (MKFLGIAALVAGLLAPSLVLG) are cleaved as a signal peptide. Residues 22-49 (APAPGTEGVNLLTPVDKRQDSQAERYGG) constitute a propeptide that is removed on maturation. Cysteine 55 and cysteine 63 are oxidised to a cystine. 2 consecutive Plastocyanin-like domains span residues 84-207 (TRRY…IVIN) and 216-373 (VDLG…LPTN). A glycan (N-linked (GlcNAc...) asparagine) is linked at asparagine 139. Residues histidine 144, histidine 146, histidine 189, and histidine 191 each contribute to the Cu cation site. 2 disulfides stabilise this stretch: cysteine 165-cysteine 586 and cysteine 349-cysteine 383. N-linked (GlcNAc...) asparagine glycans are attached at residues asparagine 282, asparagine 295, and asparagine 340. N-linked (GlcNAc...) asparagine glycosylation is found at asparagine 422 and asparagine 444. A Plastocyanin-like 3 domain is found at 431–566 (NKPVLEYVLT…GGLSNQFLER (136 aa)). Cu cation contacts are provided by histidine 477, histidine 480, histidine 482, histidine 548, cysteine 549, histidine 550, and histidine 554. Residues 607–619 (RSGVKAREVKMKW) constitute a propeptide that is removed on maturation.

This sequence belongs to the multicopper oxidase family. Cu cation is required as a cofactor.

Its subcellular location is the secreted. It catalyses the reaction 4 hydroquinone + O2 = 4 benzosemiquinone + 2 H2O. Functionally, lignin degradation and detoxification of lignin-derived products. The protein is Laccase (lacc) of Neurospora crassa (strain ATCC 24698 / 74-OR23-1A / CBS 708.71 / DSM 1257 / FGSC 987).